The primary structure comprises 268 residues: ELL-associated factor 1 (268 aa).

A disordered region spans residues 106 to 268; the sequence is IQVKKTRAEG…LSESGSDSDD (163 aa). Over residues 128–154 the composition is skewed to pro residues; that stretch reads ARPPQPSQPPPPPPPMPFRAPTKPPAG. Ser-165 carries the post-translational modification Phosphoserine. A compositionally biased stretch (basic and acidic residues) spans 171 to 181; that stretch reads DDIKRELRAEV. The necessary for transactivation activity stretch occupies residues 182–262; the sequence is DIIEQMSSSS…LRNDLQLSES (81 aa). Positions 188–203 are enriched in low complexity; sequence SSSSGSSSSDSESSSG. Residues 238 to 268 show a composition bias toward polar residues; that stretch reads NGTSRPQGSSQLMNTLRNDLQLSESGSDSDD.

This sequence belongs to the EAF family. Component of the super elongation complex (SEC), at least composed of EAF1, EAF2, CDK9, MLLT3/AF9, AFF (AFF1 or AFF4), the P-TEFb complex and ELL (ELL, ELL2 or ELL3). Interacts with ELL and ELL2.

The protein resides in the nucleus speckle. The protein localises to the nucleus. Its subcellular location is the cajal body. Its function is as follows. Acts as a transcriptional transactivator of ELL and ELL2 elongation activities. The chain is ELL-associated factor 1 (Eaf1) from Mus musculus (Mouse).